Here is a 67-residue protein sequence, read N- to C-terminus: Large ribosomal subunit protein uL29 (67 aa).

The protein belongs to the universal ribosomal protein uL29 family.

The polypeptide is Large ribosomal subunit protein uL29 (Sphingopyxis alaskensis (strain DSM 13593 / LMG 18877 / RB2256) (Sphingomonas alaskensis)).